The following is a 252-amino-acid chain: 5-oxoprolinase subunit A (252 aa).

The protein belongs to the LamB/PxpA family. As to quaternary structure, forms a complex composed of PxpA, PxpB and PxpC.

The enzyme catalyses 5-oxo-L-proline + ATP + 2 H2O = L-glutamate + ADP + phosphate + H(+). Functionally, catalyzes the cleavage of 5-oxoproline to form L-glutamate coupled to the hydrolysis of ATP to ADP and inorganic phosphate. The sequence is that of 5-oxoprolinase subunit A from Staphylococcus saprophyticus subsp. saprophyticus (strain ATCC 15305 / DSM 20229 / NCIMB 8711 / NCTC 7292 / S-41).